A 328-amino-acid polypeptide reads, in one-letter code: Serine protease 48 (328 aa).

A signal peptide spans 1-20; that stretch reads MGPAGCAFTLLLLLGISVCG. The region spanning 28–267 is the Peptidase S1 domain; the sequence is VVGGQDAAAG…YQKWINATIS (240 aa). The cysteines at positions 53 and 69 are disulfide-linked. Catalysis depends on charge relay system residues His68 and Asp114. 3 disulfide bridges follow: Cys148–Cys226, Cys181–Cys205, and Cys216–Cys244. Residue Ser220 is the Charge relay system of the active site. A glycan (N-linked (GlcNAc...) asparagine) is linked at Asn263.

The protein belongs to the peptidase S1 family.

It is found in the secreted. This Homo sapiens (Human) protein is Serine protease 48 (PRSS48).